Consider the following 365-residue polypeptide: tRNA-specific 2-thiouridylase MnmA (365 aa).

ATP-binding positions include 14–21 (AMSGGVDS) and L40. C108 acts as the Nucleophile in catalysis. C108 and C204 form a disulfide bridge. G132 provides a ligand contact to ATP. The interval 154-156 (KDQ) is interaction with tRNA. Residue C204 is the Cysteine persulfide intermediate of the active site.

This sequence belongs to the MnmA/TRMU family.

It localises to the cytoplasm. It carries out the reaction S-sulfanyl-L-cysteinyl-[protein] + uridine(34) in tRNA + AH2 + ATP = 2-thiouridine(34) in tRNA + L-cysteinyl-[protein] + A + AMP + diphosphate + H(+). In terms of biological role, catalyzes the 2-thiolation of uridine at the wobble position (U34) of tRNA, leading to the formation of s(2)U34. In Rickettsia africae (strain ESF-5), this protein is tRNA-specific 2-thiouridylase MnmA.